We begin with the raw amino-acid sequence, 306 residues long: MISSFTSLGSRPLLLSSGIAVTAAAAVYFSTGSRLANEALHNKTFKGFKGPASTWVDLPLVKFEDLSHDTRKFTFKLPNDDDVSGISPLSFLLARPHGTWSLRGIRPYTPVSLPETQGVIEFVIKHVPNGGMSSHMFSLKPNDTVSFTGPIVKYEWKQNKFDSVTLLGAGSGITPLYQLMGSILSNPEDKTKINLFYANKTSDDILLKKELDEFQQKFSDRVKIHYYLSQPKTKDIASTGAKKGFIAKEDIESLAPASNENTHVFVCGPEPFVKAYAGQQGPLFFQGSFGGILKELGYTKSQVFKV.

Residues 12-32 traverse the membrane as a helical segment; sequence PLLLSSGIAVTAAAAVYFSTG. An FAD-binding FR-type domain is found at 53–157; the sequence is STWVDLPLVK…TGPIVKYEWK (105 aa). Position 160–195 (160–195) interacts with FAD; the sequence is KFDSVTLLGAGSGITPLYQLMGSILSNPEDKTKINL.

Belongs to the flavoprotein pyridine nucleotide cytochrome reductase family. FAD is required as a cofactor.

It is found in the mitochondrion outer membrane. The enzyme catalyses 2 Fe(III)-[cytochrome b5] + NADH = 2 Fe(II)-[cytochrome b5] + NAD(+) + H(+). In terms of biological role, may mediate the reduction of outer membrane cytochrome b5. This Vanderwaltozyma polyspora (strain ATCC 22028 / DSM 70294 / BCRC 21397 / CBS 2163 / NBRC 10782 / NRRL Y-8283 / UCD 57-17) (Kluyveromyces polysporus) protein is NADH-cytochrome b5 reductase 2-B (MCR1B).